The chain runs to 146 residues: Hemoglobin subunit beta (146 aa).

The Globin domain occupies 2-146 (PFSAHEEKLI…VAAALSAEYH (145 aa)). Heme b is bound by residues His63 and His92.

Belongs to the globin family. In terms of assembly, heterotetramer of two alpha chains and two beta chains. As to expression, red blood cells.

Functionally, involved in oxygen transport from the lung to the various peripheral tissues. The polypeptide is Hemoglobin subunit beta (HBB) (Caiman crocodilus (Spectacled caiman)).